Consider the following 192-residue polypeptide: Probable nicotinate-nucleotide adenylyltransferase (192 aa).

This sequence belongs to the NadD family.

It carries out the reaction nicotinate beta-D-ribonucleotide + ATP + H(+) = deamido-NAD(+) + diphosphate. The protein operates within cofactor biosynthesis; NAD(+) biosynthesis; deamido-NAD(+) from nicotinate D-ribonucleotide: step 1/1. Catalyzes the reversible adenylation of nicotinate mononucleotide (NaMN) to nicotinic acid adenine dinucleotide (NaAD). This chain is Probable nicotinate-nucleotide adenylyltransferase, found in Shouchella clausii (strain KSM-K16) (Alkalihalobacillus clausii).